A 1302-amino-acid chain; its full sequence is Ubiquitin conjugation factor E4 B (1302 aa).

An N-acetylmethionine modification is found at methionine 1. Residues 1-155 (MEELSADEIR…EPSSGPEVSE (155 aa)) are disordered. Positions 16–33 (RLAGGQTSQPTTPLTSPQ) are enriched in low complexity. A phosphoserine mark is found at serine 23 and serine 31. Positions 51–64 (QSLGLNVHNMTPAT) are enriched in polar residues. Residues 76 to 99 (SQSSEGVSSLSSSPSNSLETQSQS) show a composition bias toward low complexity. Phosphoserine is present on residues serine 84, serine 88, serine 90, serine 101, serine 103, serine 105, and serine 124. Residues 134–147 (NDRREKRSLSDKEP) are compositionally biased toward basic and acidic residues. Serine 238 bears the Phosphoserine mark. A compositionally biased stretch (polar residues) spans 299–327 (AASQLAVPSTPLSPHSAASGTAAGSQPSS). Residues 299–406 (AASQLAVPST…SPSLGASGGA (108 aa)) form a disordered region. A compositionally biased stretch (low complexity) spans 340–374 (ASSGVSILSSSPSPPALASSPQAVPASSSRQRPSS). The residue at position 383 (serine 383) is a Phosphoserine. Positions 384-400 (PSATSRRPSSLRISPSL) are enriched in low complexity. Serine 803 and serine 969 each carry phosphoserine. Positions 1057–1077 (NKEQWDQLPRDQQQARQSQLA) are disordered. Over residues 1066–1077 (RDQQQARQSQLA) the composition is skewed to low complexity. A U-box domain is found at 1227 to 1300 (DAPDEFRDPL…QAWMREKQNS (74 aa)). Serine 1265 carries the post-translational modification Phosphoserine.

The protein belongs to the ubiquitin conjugation factor E4 family. Interacts with VCP/p97. Interacts with STUB1/CHIP and UNC45B. In terms of processing, proteolytically cleaved by caspases during apoptosis. Cleaved efficiently at Asp-123 by caspase-6 and granzyme B. Cleaved with approximately 10-fold less efficiency at Asp-109 by caspase-3 and caspase-7. In terms of tissue distribution, expressed in differentiated myotubes (at protein level). Highest expression in ovary, testis, heart and skeletal muscle. Expression is low in colon, thymus and peripheral blood leukocytes. Almost undetectable in lung and spleen.

Its subcellular location is the cytoplasm. It localises to the nucleus. The enzyme catalyses S-ubiquitinyl-[E2 ubiquitin-conjugating enzyme]-L-cysteine + [acceptor protein]-L-lysine = [E2 ubiquitin-conjugating enzyme]-L-cysteine + N(6)-ubiquitinyl-[acceptor protein]-L-lysine.. Its pathway is protein modification; protein ubiquitination. Ubiquitin-protein ligase that probably functions as an E3 ligase in conjunction with specific E1 and E2 ligases. May also function as an E4 ligase mediating the assembly of polyubiquitin chains on substrates ubiquitinated by another E3 ubiquitin ligase. May regulate myosin assembly in striated muscles together with STUB1 and VCP/p97 by targeting myosin chaperone UNC45B for proteasomal degradation. The polypeptide is Ubiquitin conjugation factor E4 B (Homo sapiens (Human)).